The following is a 241-amino-acid chain: Thyroid transcription factor 1-associated protein 26 (241 aa).

Disordered regions lie at residues 1–22 (MAPVRRSAKWRPGGIEARGEGV) and 182–205 (KRAAKKQEFERRKQEREEAQRQYK). The segment covering 186–202 (KKQEFERRKQEREEAQR) has biased composition (basic and acidic residues).

Belongs to the TAP26 family. In terms of assembly, interacts with NKX2-1. As to expression, ubiquitously expressed. In lung, expression is restricted to the alveolar epithelial cells.

It localises to the nucleus. Its function is as follows. Component of the transcription complexes of the pulmonary surfactant-associated protein-B (SFTPB) and -C (SFTPC). Enhances homeobox protein Nkx-2.1-activated SFTPB and SFTPC promoter activities. The polypeptide is Thyroid transcription factor 1-associated protein 26 (CCDC59) (Homo sapiens (Human)).